The following is a 119-amino-acid chain: NADH dehydrogenase [ubiquinone] 1 subunit C2 (119 aa).

The chain crosses the membrane as a helical span at residues 56 to 75; sequence GLHRQLLYITAFFFAGYYLV.

Belongs to the complex I NDUFC2 subunit family. Complex I is composed of 45 different subunits. Interacts with TMEM242.

The protein localises to the mitochondrion inner membrane. Accessory subunit of the mitochondrial membrane respiratory chain NADH dehydrogenase (Complex I), that is believed not to be involved in catalysis but required for the complex assembly. Complex I functions in the transfer of electrons from NADH to the respiratory chain. The immediate electron acceptor for the enzyme is believed to be ubiquinone. The protein is NADH dehydrogenase [ubiquinone] 1 subunit C2 of Pongo pygmaeus (Bornean orangutan).